The primary structure comprises 55 residues: GLDTVSFSTKGATYITYVNFLNELRVKTKPEGNSHGIPSLRKSSDDPGSSFVVAG.

The disordered stretch occupies residues 29–55; sequence KPEGNSHGIPSLRKSSDDPGSSFVVAG.

This sequence belongs to the ribosome-inactivating protein family. Type 1 RIP subfamily.

It carries out the reaction Endohydrolysis of the N-glycosidic bond at one specific adenosine on the 28S rRNA.. Single-chain ribosome-inactivating protein, possessing high antiviral potency and low toxicity to normal cells in culture and to intact animals. Capable of inhibiting HIV-1 infection and replication. This Suregada multiflora (False lime) protein is Antiviral protein GAP-31.